The sequence spans 262 residues: Adenosylcobinamide-GDP ribazoletransferase (262 aa).

5 consecutive transmembrane segments (helical) span residues alanine 41–glycine 61, alanine 65–leucine 85, isoleucine 115–serine 132, leucine 134–leucine 156, and glycine 195–leucine 215.

The protein belongs to the CobS family. Mg(2+) is required as a cofactor.

Its subcellular location is the cell inner membrane. It carries out the reaction alpha-ribazole + adenosylcob(III)inamide-GDP = adenosylcob(III)alamin + GMP + H(+). The catalysed reaction is alpha-ribazole 5'-phosphate + adenosylcob(III)inamide-GDP = adenosylcob(III)alamin 5'-phosphate + GMP + H(+). The protein operates within cofactor biosynthesis; adenosylcobalamin biosynthesis; adenosylcobalamin from cob(II)yrinate a,c-diamide: step 7/7. Joins adenosylcobinamide-GDP and alpha-ribazole to generate adenosylcobalamin (Ado-cobalamin). Also synthesizes adenosylcobalamin 5'-phosphate from adenosylcobinamide-GDP and alpha-ribazole 5'-phosphate. This is Adenosylcobinamide-GDP ribazoletransferase from Rhizobium meliloti (strain 1021) (Ensifer meliloti).